The primary structure comprises 288 residues: Stomatin (288 aa).

A disordered region spans residues 1-22 (MAEKRHTRDSEAQRLPDSFKDS). At 1–25 (MAEKRHTRDSEAQRLPDSFKDSPSK) the chain is on the cytoplasmic side. Ser10 carries the post-translational modification Phosphoserine; by PKA. Ser18 bears the Phosphoserine mark. An intramembrane segment occupies 26 to 54 (GLGPCGWILVAFSFLFTVITFPISIWMCI). Cys30 carries the S-palmitoyl cysteine lipid modification. Residues 55–288 (KIIKEYERAI…IIGAKHSHLG (234 aa)) are Cytoplasmic-facing. Cys87 carries the S-palmitoyl cysteine; partial lipid modification. 2 positions are modified to phosphoserine: Ser161 and Ser244. The tract at residues 265–273 (STIVFPLPI) is required for homooligomerization. Positions 267–269 (IVF) are required for lipid raft association. Residues 273-287 (IDMLQGIIGAKHSHL) form an interaction with LANCL1 region.

This sequence belongs to the band 7/mec-2 family. As to quaternary structure, homodimer and higher order homooligomer. The homodimer is banana-shaped. Interacts with ASIC1, ASIC2 and ASIC3. Interacts with LANCL1. Interacts with SLC2A1. Interacts with SLC4A1; this interaction positively regulates SLC4A1 activity. Identified in large complexes with SLC40A1, SLC14A1, SLC29A1 and AQP1. Interacts with STOML1; may redistribute STOM from the plasma membrane to late endosomes. Detected in erythrocytes (at protein level). Widely expressed.

Its subcellular location is the cell membrane. The protein localises to the cytoplasm. It localises to the cytoskeleton. It is found in the membrane raft. The protein resides in the melanosome. Its subcellular location is the cytoplasmic vesicle. Functionally, regulates ion channel activity and transmembrane ion transport. Regulates ASIC2 and ASIC3 channel activity. This chain is Stomatin, found in Homo sapiens (Human).